The chain runs to 482 residues: ATP synthase subunit beta (482 aa).

Position 167–174 (167–174 (GGAGVGKT)) interacts with ATP.

Belongs to the ATPase alpha/beta chains family. F-type ATPases have 2 components, CF(1) - the catalytic core - and CF(0) - the membrane proton channel. CF(1) has five subunits: alpha(3), beta(3), gamma(1), delta(1), epsilon(1). CF(0) has three main subunits: a(1), b(2) and c(9-12). The alpha and beta chains form an alternating ring which encloses part of the gamma chain. CF(1) is attached to CF(0) by a central stalk formed by the gamma and epsilon chains, while a peripheral stalk is formed by the delta and b chains.

The protein resides in the cell membrane. The enzyme catalyses ATP + H2O + 4 H(+)(in) = ADP + phosphate + 5 H(+)(out). In terms of biological role, produces ATP from ADP in the presence of a proton gradient across the membrane. The catalytic sites are hosted primarily by the beta subunits. In Corynebacterium aurimucosum (strain ATCC 700975 / DSM 44827 / CIP 107346 / CN-1) (Corynebacterium nigricans), this protein is ATP synthase subunit beta.